The chain runs to 70 residues: Small ribosomal subunit protein bS21 (70 aa).

A disordered region spans residues 40–70 (KPTAERKRKHAAAVKRHYKRIRSQQLPPRLY). The segment covering 45 to 61 (RKRKHAAAVKRHYKRIR) has biased composition (basic residues).

It belongs to the bacterial ribosomal protein bS21 family.

In Bordetella parapertussis (strain 12822 / ATCC BAA-587 / NCTC 13253), this protein is Small ribosomal subunit protein bS21.